The sequence spans 159 residues: Major allergen Mal d 1 (159 aa).

It belongs to the BetVI family.

The chain is Major allergen Mal d 1 from Malus domestica (Apple).